We begin with the raw amino-acid sequence, 338 residues long: Glycerol-3-phosphate dehydrogenase [NAD(P)+] (338 aa).

NADPH-binding residues include Ser-12, Trp-13, Arg-33, and Lys-110. Residues Lys-110, Gly-141, and Ser-143 each coordinate sn-glycerol 3-phosphate. Ala-145 contacts NADPH. Lys-196, Asp-249, Ser-259, Arg-260, and Asn-261 together coordinate sn-glycerol 3-phosphate. Lys-196 functions as the Proton acceptor in the catalytic mechanism. Residue Arg-260 participates in NADPH binding. NADPH is bound by residues Val-284 and Glu-286.

The protein belongs to the NAD-dependent glycerol-3-phosphate dehydrogenase family.

The protein localises to the cytoplasm. It catalyses the reaction sn-glycerol 3-phosphate + NAD(+) = dihydroxyacetone phosphate + NADH + H(+). It carries out the reaction sn-glycerol 3-phosphate + NADP(+) = dihydroxyacetone phosphate + NADPH + H(+). It functions in the pathway membrane lipid metabolism; glycerophospholipid metabolism. In terms of biological role, catalyzes the reduction of the glycolytic intermediate dihydroxyacetone phosphate (DHAP) to sn-glycerol 3-phosphate (G3P), the key precursor for phospholipid synthesis. The sequence is that of Glycerol-3-phosphate dehydrogenase [NAD(P)+] from Limosilactobacillus reuteri (strain DSM 20016) (Lactobacillus reuteri).